A 204-amino-acid polypeptide reads, in one-letter code: 3-isopropylmalate dehydratase small subunit (204 aa).

Belongs to the LeuD family. LeuD type 1 subfamily. In terms of assembly, heterodimer of LeuC and LeuD.

It catalyses the reaction (2R,3S)-3-isopropylmalate = (2S)-2-isopropylmalate. Its pathway is amino-acid biosynthesis; L-leucine biosynthesis; L-leucine from 3-methyl-2-oxobutanoate: step 2/4. Functionally, catalyzes the isomerization between 2-isopropylmalate and 3-isopropylmalate, via the formation of 2-isopropylmaleate. This Chloroflexus aggregans (strain MD-66 / DSM 9485) protein is 3-isopropylmalate dehydratase small subunit.